A 675-amino-acid polypeptide reads, in one-letter code: Protein PALS1 (675 aa).

Disordered regions lie at residues 1-34 (MTTS…KHRE) and 51-78 (RRSA…KKQE). The tract at residues 1 to 345 (MTTSHMNGHV…QQIKPPPAKE (345 aa)) is required for the correct localization of PALS1 and PATJ at cell-cell contacts and the normal formation of tight junctions and adherens junctions. Composition is skewed to basic and acidic residues over residues 10–34 (VTEE…KHRE) and 54–78 (AQLE…KKQE). S14 and S25 each carry phosphoserine. An interaction with PARD6B region spans residues 21 to 140 (VDLASPEEHQ…LKHIQHTLID (120 aa)). Phosphoserine occurs at positions 83 and 84. 2 L27 domains span residues 120-177 (KILE…NKAS) and 179-235 (PFPL…MQLE). The segment at 181–243 (PLISNAQDLA…LEPITDERVY (63 aa)) is interaction with LIN7C. The 81-residue stretch at 256–336 (IVRIEKARDI…TLTFVLIPSQ (81 aa)) folds into the PDZ domain. The SH3 domain occupies 345 to 417 (ETVIHVKAHF…PGKSFQQQRE (73 aa)). Residues 479–660 (KRPIILIGPQ…AYQELLRLIN (182 aa)) form the Guanylate kinase-like domain. Position 486-493 (486-493 (GPQNCGQN)) interacts with ATP.

The protein belongs to the MAGUK family. Heterodimer with MPP1. Forms a heterotrimeric complex composed of PALS1, LIN7B and PATJ; the N-terminal L27 domain of PALS1 interacts with the L27 domain of PATJ and the C-terminal L27 domain of PALS1 interacts with the L27 domain of LIN7B. Component of a complex composed of PALS1, CRB1 and MPP4. Component of a complex whose core is composed of ARHGAP17, AMOT, PALS1, PATJ and PARD3/PAR3. Component of a complex composed of PALS1, CRB1 and EPB41L5. Within the complex, interacts (via HOOK domain) with EPB41L5 (via FERM domain), and interacts with CRB1 (via intracellular domain). Component of a complex composed of PALS1, MPP3 and CRB1; PALS1 acts as a bridging protein between MPP3 (via guanylate kinase-like domain) and CRB1. Component of a complex composed of CRB3, PALS1 and PATJ. As part of the Crumbs complex; interacts with WWP1, the interaction is enhanced by AMOTL2 and facilitates WWP1 localization to the plasma membrane. The Crumbs complex promotes monoubiquitination of AMOTL2 by WWP1, which activates the Hippo signaling pathway. Interacts (via PDZ domain) with PATJ (via N-terminus). Interacts with EZR. Interacts (via PDZ domain) with CRB1 (via C-terminal ERLI motif). While the PDZ domain is sufficient for interaction with CRB1, the adjacent SH3 and guanylate kinase-like domains are likely to contribute to a high affinity interaction. Interacts with WWTR1/TAZ (via WW domain). Interacts with MPP7. Interacts (via PDZ domain) with CRB3 (via C-terminus). Interacts with LIN7C. Interacts with MPDZ. Interacts with PARD6B. Interacts with SC6A1. Interacts with CDH5; the interaction promotes PALS1 localization to cell junctions and is required for CDH5-mediated vascular lumen formation and endothelial cell. Interacts with NPHP1 (via coiled coil and SH3 domains). Interacts with NPHP4. Interacts with CRB2.

The protein localises to the golgi apparatus. The protein resides in the cell membrane. It localises to the endomembrane system. It is found in the cell junction. Its subcellular location is the tight junction. The protein localises to the adherens junction. The protein resides in the cell projection. It localises to the axon. It is found in the perikaryon. Its subcellular location is the apical cell membrane. Plays a role in tight junction biogenesis and in the establishment of cell polarity in epithelial cells. Also involved in adherens junction biogenesis by ensuring correct localization of the exocyst complex protein EXOC4/SEC8 which allows trafficking of adherens junction structural component CDH1 to the cell surface. Plays a role through its interaction with CDH5 in vascular lumen formation and endothelial membrane polarity. Required during embryonic and postnatal retinal development. Required for the maintenance of cerebellar progenitor cells in an undifferentiated proliferative state, preventing premature differentiation, and is required for cerebellar histogenesis, fissure formation, cerebellar layer organization and cortical development. Plays a role in neuronal progenitor cell survival, potentially via promotion of mTOR signaling. Plays a role in the radial and longitudinal extension of the myelin sheath in Schwann cells. May modulate SC6A1/GAT1-mediated GABA uptake by stabilizing the transporter. May play a role in the T-cell receptor-mediated activation of NF-kappa-B. Required for localization of EZR to the apical membrane of parietal cells and may play a role in the dynamic remodeling of the apical cytoskeleton. Required for the normal polarized localization of the vesicular marker STX4. Required for the correct trafficking of the myelin proteins PMP22 and MAG. Involved in promoting phosphorylation and cytoplasmic retention of transcriptional coactivators YAP1 and WWTR1/TAZ which leads to suppression of TGFB1-dependent transcription of target genes such as CCN2/CTGF, SERPINE1/PAI1, SNAI1/SNAIL1 and SMAD7. The protein is Protein PALS1 of Pongo abelii (Sumatran orangutan).